The following is a 346-amino-acid chain: D-alanine--D-alanine ligase (346 aa).

Residues 133–327 enclose the ATP-grasp domain; it reads KLYAKSVGVK…ALADQISLEK (195 aa). 159 to 211 serves as a coordination point for ATP; that stretch reads LSFPCIIKPARLGSSIGISIVKDEKDLEYAKDVGFEFDNDLVVEEFKNNIKEY. 3 residues coordinate Mg(2+): D284, E296, and N298.

It belongs to the D-alanine--D-alanine ligase family. Requires Mg(2+) as cofactor. It depends on Mn(2+) as a cofactor.

It is found in the cytoplasm. The enzyme catalyses 2 D-alanine + ATP = D-alanyl-D-alanine + ADP + phosphate + H(+). It participates in cell wall biogenesis; peptidoglycan biosynthesis. Cell wall formation. The chain is D-alanine--D-alanine ligase from Campylobacter jejuni subsp. jejuni serotype O:6 (strain 81116 / NCTC 11828).